A 372-amino-acid chain; its full sequence is 3-dehydroquinate synthase (372 aa).

NAD(+) is bound by residues 116 to 120 (GVVGD), 140 to 141 (TT), K153, K162, and 180 to 183 (TLKT). The Zn(2+) site is built by E195, H260, and H277.

The protein belongs to the sugar phosphate cyclases superfamily. Dehydroquinate synthase family. It depends on NAD(+) as a cofactor. The cofactor is Co(2+). Zn(2+) is required as a cofactor.

It is found in the cytoplasm. The catalysed reaction is 7-phospho-2-dehydro-3-deoxy-D-arabino-heptonate = 3-dehydroquinate + phosphate. Its pathway is metabolic intermediate biosynthesis; chorismate biosynthesis; chorismate from D-erythrose 4-phosphate and phosphoenolpyruvate: step 2/7. Functionally, catalyzes the conversion of 3-deoxy-D-arabino-heptulosonate 7-phosphate (DAHP) to dehydroquinate (DHQ). The protein is 3-dehydroquinate synthase of Prochlorococcus marinus (strain MIT 9313).